Here is a 202-residue protein sequence, read N- to C-terminus: Putative 3-methyladenine DNA glycosylase (202 aa).

Belongs to the DNA glycosylase MPG family.

In Staphylococcus aureus (strain Mu3 / ATCC 700698), this protein is Putative 3-methyladenine DNA glycosylase.